The following is a 262-amino-acid chain: MTFPYYASAEQIMRDRSELARKGIARGRSVVILTYADGVLFVAENPSNTLRKTSEIYDRIGFAAVGKYNEFESLRKAGIQLADMRGYSYDRADVSGLSLANTYANALGGVFTEQPKPFEVELCVAEVARYGKPKPSQLYRISYDGSITDETRFLVMGGATEPIAAALKESYQPDLELGAAVAVAVGALATPADSGNGTAASPRVLTAGDLEVAILDRNRPRRAFRRLSAAALEELLPTTGESDAGDSGADGSPSGDSPDTSA.

Positions 235-262 (LLPTTGESDAGDSGADGSPSGDSPDTSA) are disordered.

The protein belongs to the peptidase T1A family. In terms of assembly, the 20S proteasome core is composed of 14 alpha and 14 beta subunits that assemble into four stacked heptameric rings, resulting in a barrel-shaped structure. The two inner rings, each composed of seven catalytic beta subunits, are sandwiched by two outer rings, each composed of seven alpha subunits. The catalytic chamber with the active sites is on the inside of the barrel. Has a gated structure, the ends of the cylinder being occluded by the N-termini of the alpha-subunits. Is capped by the proteasome-associated ATPase, ARC.

The protein localises to the cytoplasm. The protein operates within protein degradation; proteasomal Pup-dependent pathway. Its activity is regulated as follows. The formation of the proteasomal ATPase ARC-20S proteasome complex, likely via the docking of the C-termini of ARC into the intersubunit pockets in the alpha-rings, may trigger opening of the gate for substrate entry. Interconversion between the open-gate and close-gate conformations leads to a dynamic regulation of the 20S proteasome proteolysis activity. In terms of biological role, component of the proteasome core, a large protease complex with broad specificity involved in protein degradation. The sequence is that of Proteasome subunit alpha from Gordonia bronchialis (strain ATCC 25592 / DSM 43247 / BCRC 13721 / JCM 3198 / KCTC 3076 / NBRC 16047 / NCTC 10667) (Rhodococcus bronchialis).